We begin with the raw amino-acid sequence, 203 residues long: Probable flagellin 1 (203 aa).

Residues 1 to 6 constitute a propeptide that is removed on maturation; that stretch reads MRRRRG.

The protein belongs to the archaeal flagellin family.

It localises to the archaeal flagellum. Functionally, flagellin is the subunit protein which polymerizes to form the filaments of archaeal flagella. The polypeptide is Probable flagellin 1 (flaB1) (Aeropyrum pernix (strain ATCC 700893 / DSM 11879 / JCM 9820 / NBRC 100138 / K1)).